The sequence spans 177 residues: ATP synthase subunit b (177 aa).

A helical transmembrane segment spans residues 29 to 49 (FFFVLAIFLIVLAVIGTFVVP).

It belongs to the ATPase B chain family. F-type ATPases have 2 components, F(1) - the catalytic core - and F(0) - the membrane proton channel. F(1) has five subunits: alpha(3), beta(3), gamma(1), delta(1), epsilon(1). F(0) has three main subunits: a(1), b(2) and c(10-14). The alpha and beta chains form an alternating ring which encloses part of the gamma chain. F(1) is attached to F(0) by a central stalk formed by the gamma and epsilon chains, while a peripheral stalk is formed by the delta and b chains.

Its subcellular location is the cell membrane. In terms of biological role, f(1)F(0) ATP synthase produces ATP from ADP in the presence of a proton or sodium gradient. F-type ATPases consist of two structural domains, F(1) containing the extramembraneous catalytic core and F(0) containing the membrane proton channel, linked together by a central stalk and a peripheral stalk. During catalysis, ATP synthesis in the catalytic domain of F(1) is coupled via a rotary mechanism of the central stalk subunits to proton translocation. Component of the F(0) channel, it forms part of the peripheral stalk, linking F(1) to F(0). The chain is ATP synthase subunit b from Mycolicibacterium paratuberculosis (strain ATCC BAA-968 / K-10) (Mycobacterium paratuberculosis).